A 1641-amino-acid polypeptide reads, in one-letter code: Maestro heat-like repeat-containing protein family member 1 (1641 aa).

7 HEAT repeats span residues 3 to 41 (ESSM…ARPV), 159 to 198 (VPFL…GALE), 344 to 382 (CSSP…SAAA), 385 to 423 (EDKK…HGYL), 1048 to 1086 (PDQL…ERGG), 1358 to 1396 (LMLL…GCPD), and 1605 to 1641 (QVDL…VKLA).

The protein belongs to the MROH1 family. Homooligomer; homooligomerizes at lysosome scission sites.

The protein localises to the lysosome membrane. In terms of biological role, lysosome fission factor. Recruited to lysosomes by RAB7 (RAB7A or RAB7B) at scission sites and homooligomerizes to mediate the constriction and scission of lysosomal tubules. May sever membranes by inserting amphipathic helices into one bilayer leaflet. Lysosome fission is required to maintain their steady-state number, shape, size, composition and function, and to accomplish regeneration. This is Maestro heat-like repeat-containing protein family member 1 from Homo sapiens (Human).